The chain runs to 353 residues: Photosystem II protein D1 (353 aa).

The residue at position 2 (threonine 2) is an N-acetylthreonine. Position 2 is a phosphothreonine (threonine 2). 3 helical membrane passes run tyrosine 29–serine 46, histidine 118–leucine 133, and tryptophan 142–alanine 156. Histidine 118 provides a ligand contact to chlorophyll a. Residue tyrosine 126 participates in pheophytin a binding. [CaMn4O5] cluster-binding residues include aspartate 170 and glutamate 189. A helical transmembrane segment spans residues phenylalanine 197 to leucine 218. Histidine 198 is a binding site for chlorophyll a. A quinone is bound by residues histidine 215 and serine 264–phenylalanine 265. Position 215 (histidine 215) interacts with Fe cation. Histidine 272 serves as a coordination point for Fe cation. A helical membrane pass occupies residues phenylalanine 274 to leucine 288. The [CaMn4O5] cluster site is built by histidine 332, glutamate 333, aspartate 342, and alanine 344. Positions serine 345–glycine 353 are excised as a propeptide.

The protein belongs to the reaction center PufL/M/PsbA/D family. In terms of assembly, PSII is composed of 1 copy each of membrane proteins PsbA, PsbB, PsbC, PsbD, PsbE, PsbF, PsbH, PsbI, PsbJ, PsbK, PsbL, PsbM, PsbT, PsbX, PsbY, PsbZ, Psb30/Ycf12, at least 3 peripheral proteins of the oxygen-evolving complex and a large number of cofactors. It forms dimeric complexes. The cofactor is The D1/D2 heterodimer binds P680, chlorophylls that are the primary electron donor of PSII, and subsequent electron acceptors. It shares a non-heme iron and each subunit binds pheophytin, quinone, additional chlorophylls, carotenoids and lipids. D1 provides most of the ligands for the Mn4-Ca-O5 cluster of the oxygen-evolving complex (OEC). There is also a Cl(-1) ion associated with D1 and D2, which is required for oxygen evolution. The PSII complex binds additional chlorophylls, carotenoids and specific lipids.. In terms of processing, tyr-161 forms a radical intermediate that is referred to as redox-active TyrZ, YZ or Y-Z. C-terminally processed by CTPA; processing is essential to allow assembly of the oxygen-evolving complex and thus photosynthetic growth.

The protein localises to the plastid. Its subcellular location is the chloroplast thylakoid membrane. It catalyses the reaction 2 a plastoquinone + 4 hnu + 2 H2O = 2 a plastoquinol + O2. In terms of biological role, photosystem II (PSII) is a light-driven water:plastoquinone oxidoreductase that uses light energy to abstract electrons from H(2)O, generating O(2) and a proton gradient subsequently used for ATP formation. It consists of a core antenna complex that captures photons, and an electron transfer chain that converts photonic excitation into a charge separation. The D1/D2 (PsbA/PsbD) reaction center heterodimer binds P680, the primary electron donor of PSII as well as several subsequent electron acceptors. The polypeptide is Photosystem II protein D1 (Chaetosphaeridium globosum (Charophycean green alga)).